The primary structure comprises 429 residues: Glutamate-1-semialdehyde 2,1-aminomutase 1 (429 aa).

K267 carries the N6-(pyridoxal phosphate)lysine modification.

It belongs to the class-III pyridoxal-phosphate-dependent aminotransferase family. HemL subfamily. In terms of assembly, homodimer. The cofactor is pyridoxal 5'-phosphate.

It localises to the cytoplasm. The enzyme catalyses (S)-4-amino-5-oxopentanoate = 5-aminolevulinate. It functions in the pathway porphyrin-containing compound metabolism; protoporphyrin-IX biosynthesis; 5-aminolevulinate from L-glutamyl-tRNA(Glu): step 2/2. The protein is Glutamate-1-semialdehyde 2,1-aminomutase 1 of Bacillus velezensis (strain DSM 23117 / BGSC 10A6 / LMG 26770 / FZB42) (Bacillus amyloliquefaciens subsp. plantarum).